Reading from the N-terminus, the 333-residue chain is Fructose-1,6-bisphosphatase class 1 (333 aa).

E89, D110, L112, and D113 together coordinate Mg(2+). Residues D113 to S116, N206, Y239, Y257 to Y259, and K269 each bind substrate. Residue E275 participates in Mg(2+) binding.

The protein belongs to the FBPase class 1 family. As to quaternary structure, homotetramer. The cofactor is Mg(2+).

Its subcellular location is the cytoplasm. It catalyses the reaction beta-D-fructose 1,6-bisphosphate + H2O = beta-D-fructose 6-phosphate + phosphate. It functions in the pathway carbohydrate biosynthesis; gluconeogenesis. This chain is Fructose-1,6-bisphosphatase class 1, found in Sodalis glossinidius (strain morsitans).